The following is a 144-amino-acid chain: F420-non-reducing hydrogenase vhc iron-sulfur subunit D (144 aa).

This sequence belongs to the MvhD/VhuD family. In terms of assembly, the F420-non-reducing hydrogenase vhc is composed of three subunits; VhcA, VhcD and VhcG. It depends on [2Fe-2S] cluster as a cofactor.

The chain is F420-non-reducing hydrogenase vhc iron-sulfur subunit D (vhcD) from Methanococcus voltae.